Consider the following 259-residue polypeptide: MQLQLICEDPSQQSHLDELAARWQLSHTDESDFALVLTAERLELRKVDEPKLGAIFVDLIGGAVGHRRKFGGGKGQAIAKAAGLNKGATPTVLDGTAGLGRDAFVLASLGCKVQMVERHPVVAALLDDGLARAKQDPEIGTWVSERMSLIHASSHDALDQLAQDREFVKPDVVYLDPMYPHPENKKKSALVKKEMRVFQSLVGADLDADGLLEPALALATKRVVVKRPDYANWLNEQKPSMAIETKKNRFDVYVKASMA.

Residues 101–102 (RD), 117–118 (ER), 153–154 (SS), and Asp-176 contribute to the S-adenosyl-L-methionine site.

Belongs to the methyltransferase superfamily. RsmJ family.

It is found in the cytoplasm. The enzyme catalyses guanosine(1516) in 16S rRNA + S-adenosyl-L-methionine = N(2)-methylguanosine(1516) in 16S rRNA + S-adenosyl-L-homocysteine + H(+). Its function is as follows. Specifically methylates the guanosine in position 1516 of 16S rRNA. This Vibrio parahaemolyticus serotype O3:K6 (strain RIMD 2210633) protein is Ribosomal RNA small subunit methyltransferase J.